A 399-amino-acid polypeptide reads, in one-letter code: P2X purinoceptor 1 (399 aa).

The Cytoplasmic portion of the chain corresponds to 1 to 28 (MARRLQDELSAFFFEYDTPRMVLVRNKK). The helical transmembrane segment at 29-50 (VGVIFRLIQLVVLVYVIGWVFV) threads the bilayer. Over 51-338 (YEKGYQTSSD…IPTMTTIGSG (288 aa)) the chain is Extracellular. Lys68, Lys70, and Lys140 together coordinate CTP. Residue Lys70 coordinates ATP. 3 cysteine pairs are disulfide-bonded: Cys117-Cys165, Cys126-Cys149, and Cys132-Cys159. N-linked (GlcNAc...) asparagine glycans are attached at residues Asn153 and Asn184. Thr186 lines the CTP pocket. Residue Thr186 coordinates ATP. Asn210 carries an N-linked (GlcNAc...) asparagine glycan. Cystine bridges form between Cys217–Cys227 and Cys261–Cys270. ATP contacts are provided by Ser286, Asn290, and Arg292. Asn290 and Arg292 together coordinate CTP. N-linked (GlcNAc...) asparagine glycosylation occurs at Asn300. Residue Lys309 coordinates CTP. Lys309 provides a ligand contact to ATP. The interval 331–338 (TMTTIGSG) is pore-forming motif. Residues 339–358 (IGIFGVATVLCDLLLLHILP) traverse the membrane as a helical segment. The Cytoplasmic portion of the chain corresponds to 359 to 399 (KRHYYKQKKFKYAEDMGPGEGEHDPVATSSTLGLQENMRTS). The segment at 374 to 399 (MGPGEGEHDPVATSSTLGLQENMRTS) is disordered. Residues 385-399 (ATSSTLGLQENMRTS) show a composition bias toward polar residues. 2 positions are modified to phosphoserine: Ser387 and Ser388. Thr389 carries the phosphothreonine modification.

It belongs to the P2X receptor family. Functional P2XRs are organized as homomeric and heteromeric trimers. Homotrimer. Forms heterodimer with P2RX2. Forms heterodimer with P2RX4. Forms heterodimer with P2RX5. As to expression, high levels in vas deferens and urinary bladder. Lower extent in spinal cord, coeliac ganglion, lung and spleen (probably in the smooth muscle part of both organs).

It is found in the cell membrane. It carries out the reaction Ca(2+)(in) = Ca(2+)(out). The enzyme catalyses K(+)(in) = K(+)(out). The catalysed reaction is Na(+)(in) = Na(+)(out). Activated by low concentrations of ATP (&lt;1 uM). Undergoes rapid desensitisation. Sensitives to the ATP agonist:alpha/beta-methylene-ATP. Modulated by cholesterol. ATP-gated nonselective transmembrane cation channel permeable to potassium, sodium and with relatively high calcium permeability. Furthermore, CTP functions as a weak affinity agonist for P2RX1. Plays a role a role in urogenital, immune and cardiovascular function. Specifically, plays an important role in neurogenic contraction of smooth muscle of the vas deferens, and therefore is essential for normal male reproductive function. In addition, contributes to smooth muscle contractions of the urinary bladder. On platelets, contributes to platelet activation and aggregation and thereby, also to thrombosis. On neutrophils, it is involved in chemotaxis and in mitigating the activation of circulating cells. The chain is P2X purinoceptor 1 (P2rx1) from Rattus norvegicus (Rat).